Reading from the N-terminus, the 149-residue chain is Calmodulin (149 aa).

Alanine 2 carries the N-acetylalanine modification. 4 EF-hand domains span residues 8 to 43, 44 to 79, 81 to 116, and 117 to 149; these read EQIA…LGQN, PTEA…KMKE, DSEE…LGEK, and LTDD…MVSK. At lysine 14 the chain carries N6,N6-dimethyllysine. Ca(2+) contacts are provided by aspartate 21, aspartate 23, aspartate 25, threonine 27, glutamate 32, aspartate 57, aspartate 59, asparagine 61, threonine 63, glutamate 68, aspartate 94, aspartate 96, asparagine 98, and glutamate 105. Lysine 116 carries the post-translational modification N6,N6,N6-trimethyllysine. The Ca(2+) site is built by aspartate 130, aspartate 132, aspartate 134, histidine 136, and glutamate 141.

Belongs to the calmodulin family. Post-translationally, the pantophobiac mutant CAM2 is undermethylated on Lys-116.

In terms of biological role, calmodulin mediates the control of a large number of enzymes, ion channels and other proteins by Ca(2+). Among the enzymes to be stimulated by the calmodulin-Ca(2+) complex are a number of protein kinases and phosphatases. This chain is Calmodulin (CAM), found in Paramecium tetraurelia.